A 335-amino-acid polypeptide reads, in one-letter code: L-lactate dehydrogenase B chain (335 aa).

NAD(+) contacts are provided by residues 29-57 (GQVGMACAISILEKGLCDELALVDVVEDK) and Arg99. 3 residues coordinate substrate: Arg106, Asn138, and Arg169. Asn138 contributes to the NAD(+) binding site. His193 functions as the Proton acceptor in the catalytic mechanism. Thr248 lines the substrate pocket.

The protein belongs to the LDH/MDH superfamily. LDH family. As to quaternary structure, homotetramer.

It is found in the cytoplasm. It carries out the reaction (S)-lactate + NAD(+) = pyruvate + NADH + H(+). It participates in fermentation; pyruvate fermentation to lactate; (S)-lactate from pyruvate: step 1/1. Functionally, interconverts simultaneously and stereospecifically pyruvate and lactate with concomitant interconversion of NADH and NAD(+). The polypeptide is L-lactate dehydrogenase B chain (LDHB) (Sceloporus undulatus (Eastern fence lizard)).